The following is a 251-amino-acid chain: Uroporphyrinogen-III synthase (251 aa).

The tract at residues 231–251 (PAPNPESLASSIVAFDEENSS) is disordered.

This sequence belongs to the uroporphyrinogen-III synthase family.

It carries out the reaction hydroxymethylbilane = uroporphyrinogen III + H2O. Its pathway is porphyrin-containing compound metabolism; protoporphyrin-IX biosynthesis; coproporphyrinogen-III from 5-aminolevulinate: step 3/4. Catalyzes cyclization of the linear tetrapyrrole, hydroxymethylbilane, to the macrocyclic uroporphyrinogen III. This Schizosaccharomyces pombe (strain 972 / ATCC 24843) (Fission yeast) protein is Uroporphyrinogen-III synthase (ups1).